We begin with the raw amino-acid sequence, 197 residues long: MEVKKVLVIDNIDSFVWNLVQYVGTLGYKVKLVDNKITLDEIKKINPDRIIISPGPKTPKEAGNCIKIIQEVDIPILGVCLGHQCIVEAFGGEVGRAKRVMHGKASLINHDGEGIFKDIPNPFYGGRYHSLIAKEVPKELKITAKSLDDNYIMGVRHKKLPIEGVQFHPESILTESDNLKFPDLGLKLIKNFVESEY.

Positions 5–197 (KVLVIDNIDS…LIKNFVESEY (193 aa)) constitute a Glutamine amidotransferase type-1 domain. 55–57 (GPK) is a binding site for L-glutamine. C80 serves as the catalytic Nucleophile; for GATase activity. Residues Q84 and 130–131 (SL) each bind L-glutamine. Active-site for GATase activity residues include H168 and E170.

As to quaternary structure, heterotetramer consisting of two non-identical subunits: a beta subunit (TrpG) and a large alpha subunit (TrpE).

It catalyses the reaction chorismate + L-glutamine = anthranilate + pyruvate + L-glutamate + H(+). It participates in amino-acid biosynthesis; L-tryptophan biosynthesis; L-tryptophan from chorismate: step 1/5. In terms of biological role, part of a heterotetrameric complex that catalyzes the two-step biosynthesis of anthranilate, an intermediate in the biosynthesis of L-tryptophan. In the first step, the glutamine-binding beta subunit (TrpG) of anthranilate synthase (AS) provides the glutamine amidotransferase activity which generates ammonia as a substrate that, along with chorismate, is used in the second step, catalyzed by the large alpha subunit of AS (TrpE) to produce anthranilate. In the absence of TrpG, TrpE can synthesize anthranilate directly from chorismate and high concentrations of ammonia. In Methanocaldococcus jannaschii (strain ATCC 43067 / DSM 2661 / JAL-1 / JCM 10045 / NBRC 100440) (Methanococcus jannaschii), this protein is Anthranilate synthase component 2 (trpG).